Reading from the N-terminus, the 526-residue chain is Probable inorganic phosphate transporter 1-3 (526 aa).

At 1–21 (MADGQLKVLTTLDHARTQWYH) the chain is on the cytoplasmic side. A helical membrane pass occupies residues 22-42 (FMAIVIAGMGFFTDAYDLFCI). The Extracellular segment spans residues 43 to 70 (SLVSKLLGRIYYTDLAGDNPGSLPPNVS). Residues 71 to 91 (AAVNGVALCGTLAGQLFFGWL) form a helical membrane-spanning segment. At 92-99 (GDKLGRKS) the chain is on the cytoplasmic side. Residues 100-120 (VYGFTLVLMVVCSVASGLSFG) traverse the membrane as a helical segment. Residues 121-124 (RTAK) are Extracellular-facing. A helical transmembrane segment spans residues 125 to 145 (GVVATLCFFRFWLGFGIGGDY). The Cytoplasmic segment spans residues 146-163 (PLSATIMSEYANKRTRGA). The helical transmembrane segment at 164–184 (FIAAVFAMQGFGILFGAIVAL) threads the bilayer. Residues 185 to 211 (VVSAGFRNAYPAPSYADGRAASLVPEA) lie on the Extracellular side of the membrane. The chain crosses the membrane as a helical span at residues 212–232 (DYVWRIILMFGTVPAALTYYW). The Cytoplasmic segment spans residues 233 to 294 (RMKMPETARY…GLFSRQFVRR (62 aa)). Residues 295-315 (HGVHLVATTSTWFLLDIAFYS) traverse the membrane as a helical segment. Topologically, residues 316–349 (QNLFQKDIFSKVGWIPPARTMNAVEEVFRIARAQ) are extracellular. Residues 350 to 370 (ALIALCGTIPGYWFTVAFIDV) traverse the membrane as a helical segment. Residues 371–373 (AGR) lie on the Cytoplasmic side of the membrane. Residues 374–394 (FAIQLMGFAMMTVFMLGLAAP) traverse the membrane as a helical segment. The Extracellular portion of the chain corresponds to 395 to 407 (YHHWTTPGNHTGF). Residues 408 to 428 (VVMYGFTFFFANFGPNATTFI) traverse the membrane as a helical segment. The Cytoplasmic segment spans residues 429–444 (VPAEIYPARLRSTCHG). Residues 445-465 (ISAAAGKAGAIVGAFGFLYAA) traverse the membrane as a helical segment. The Extracellular segment spans residues 466-483 (QDPHKPEAGYKPGIGIRN). Residues 484–504 (ALFVLAGTNFLGMLMTLLVPE) form a helical membrane-spanning segment. Residues 505–526 (SKGMSLEEVSKENVADDEEATA) lie on the Cytoplasmic side of the membrane.

The protein belongs to the major facilitator superfamily. Phosphate:H(+) symporter (TC 2.A.1.9) family. Expressed at low levels in roots.

It localises to the membrane. Its function is as follows. High-affinity transporter for external inorganic phosphate. In Oryza sativa subsp. japonica (Rice), this protein is Probable inorganic phosphate transporter 1-3 (PHT1-3).